The sequence spans 60 residues: Large ribosomal subunit protein uL30 (60 aa).

It belongs to the universal ribosomal protein uL30 family. As to quaternary structure, part of the 50S ribosomal subunit.

The sequence is that of Large ribosomal subunit protein uL30 from Lactobacillus johnsonii (strain CNCM I-12250 / La1 / NCC 533).